A 440-amino-acid chain; its full sequence is Chromosome partition protein MukF (440 aa).

A leucine-zipper region spans residues 208–236 (LSETSGTLRELQDTLEAAGDKLQANLLRI).

Belongs to the MukF family. Interacts, and probably forms a ternary complex, with MukE and MukB via its C-terminal region. The complex formation is stimulated by calcium or magnesium. It is required for an interaction between MukE and MukB.

Its subcellular location is the cytoplasm. It is found in the nucleoid. In terms of biological role, involved in chromosome condensation, segregation and cell cycle progression. May participate in facilitating chromosome segregation by condensation DNA from both sides of a centrally located replisome during cell division. Not required for mini-F plasmid partitioning. Probably acts via its interaction with MukB and MukE. Overexpression results in anucleate cells. It has a calcium binding activity. The sequence is that of Chromosome partition protein MukF from Salmonella gallinarum (strain 287/91 / NCTC 13346).